A 127-amino-acid polypeptide reads, in one-letter code: uncharacterized protein (127 aa).

This is an uncharacterized protein from Methanocaldococcus jannaschii (strain ATCC 43067 / DSM 2661 / JAL-1 / JCM 10045 / NBRC 100440) (Methanococcus jannaschii).